We begin with the raw amino-acid sequence, 644 residues long: Type III restriction-modification enzyme EcoP15I Mod subunit (644 aa).

Residues 123 to 126 (DPPY) are binding of S-adenosyl methionine.

The protein belongs to the N(4)/N(6)-methyltransferase family. As to quaternary structure, forms a homodimer capable of methylating the target sequence in the absence of Res. A heterotetramer with stoichiometry Res(2)Mod(2). A heterotrimer with stoichiometry Res(1)Mod(2).

The enzyme catalyses a 2'-deoxyadenosine in DNA + S-adenosyl-L-methionine = an N(6)-methyl-2'-deoxyadenosine in DNA + S-adenosyl-L-homocysteine + H(+). In terms of biological role, a beta subtype methylase that binds the system-specific DNA recognition site 5'-CAGCAG-3' and methylates A-5 (of only 1 strand as the other does not have an A residue). DNA restriction requires both the Res and Mod subunits. The A-5 nucleotide flips into the catalytic pocket of one Mod subunit for modification, while the other Mod subunit makes most of the DNA sequence-specific contacts. This Escherichia coli protein is Type III restriction-modification enzyme EcoP15I Mod subunit.